Here is a 363-residue protein sequence, read N- to C-terminus: Phosphoserine aminotransferase (363 aa).

Arg42 contacts L-glutamate. Pyridoxal 5'-phosphate is bound by residues 76–77, Trp102, Thr156, Asp175, and Gln198; that span reads GR. An N6-(pyridoxal phosphate)lysine modification is found at Lys199. 240-241 is a binding site for pyridoxal 5'-phosphate; it reads NT.

Belongs to the class-V pyridoxal-phosphate-dependent aminotransferase family. SerC subfamily. As to quaternary structure, homodimer. Requires pyridoxal 5'-phosphate as cofactor.

The protein resides in the cytoplasm. It carries out the reaction O-phospho-L-serine + 2-oxoglutarate = 3-phosphooxypyruvate + L-glutamate. The catalysed reaction is 4-(phosphooxy)-L-threonine + 2-oxoglutarate = (R)-3-hydroxy-2-oxo-4-phosphooxybutanoate + L-glutamate. The protein operates within amino-acid biosynthesis; L-serine biosynthesis; L-serine from 3-phospho-D-glycerate: step 2/3. It participates in cofactor biosynthesis; pyridoxine 5'-phosphate biosynthesis; pyridoxine 5'-phosphate from D-erythrose 4-phosphate: step 3/5. Functionally, catalyzes the reversible conversion of 3-phosphohydroxypyruvate to phosphoserine and of 3-hydroxy-2-oxo-4-phosphonooxybutanoate to phosphohydroxythreonine. This Shewanella sp. (strain W3-18-1) protein is Phosphoserine aminotransferase.